The primary structure comprises 120 residues: Immunoglobulin kappa variable 2D-28 (120 aa).

Residues 1–19 (MRLPAQLLGLLMLWVSGSS) form the signal peptide. The Ig-like domain occupies 20–120 (GDIVMTQSPL…YYCMQALQTP (101 aa)). A framework-1 region spans residues 21–43 (DIVMTQSPLSLPVTPGEPASISC). An intrachain disulfide couples cysteine 43 to cysteine 113. A complementarity-determining-1 region spans residues 44 to 59 (RSSQSLLHSNGYNYLD). Residues 60–74 (WYLQKPGQSPQLLIY) form a framework-2 region. A complementarity-determining-2 region spans residues 75–81 (LGSNRAS). Residues 82–113 (GVPDRFSGSGSGTDFTLKISRVEAEDVGVYYC) are framework-3. A complementarity-determining-3 region spans residues 114-120 (MQALQTP).

Immunoglobulins are composed of two identical heavy chains and two identical light chains; disulfide-linked.

The protein resides in the secreted. The protein localises to the cell membrane. Its function is as follows. V region of the variable domain of immunoglobulin light chains that participates in the antigen recognition. Immunoglobulins, also known as antibodies, are membrane-bound or secreted glycoproteins produced by B lymphocytes. In the recognition phase of humoral immunity, the membrane-bound immunoglobulins serve as receptors which, upon binding of a specific antigen, trigger the clonal expansion and differentiation of B lymphocytes into immunoglobulins-secreting plasma cells. Secreted immunoglobulins mediate the effector phase of humoral immunity, which results in the elimination of bound antigens. The antigen binding site is formed by the variable domain of one heavy chain, together with that of its associated light chain. Thus, each immunoglobulin has two antigen binding sites with remarkable affinity for a particular antigen. The variable domains are assembled by a process called V-(D)-J rearrangement and can then be subjected to somatic hypermutations which, after exposure to antigen and selection, allow affinity maturation for a particular antigen. The sequence is that of Immunoglobulin kappa variable 2D-28 from Homo sapiens (Human).